The chain runs to 231 residues: Large ribosomal subunit protein uL1 (231 aa).

Belongs to the universal ribosomal protein uL1 family. In terms of assembly, part of the 50S ribosomal subunit.

Its function is as follows. Binds directly to 23S rRNA. The L1 stalk is quite mobile in the ribosome, and is involved in E site tRNA release. In terms of biological role, protein L1 is also a translational repressor protein, it controls the translation of the L11 operon by binding to its mRNA. This chain is Large ribosomal subunit protein uL1, found in Paracidovorax citrulli (strain AAC00-1) (Acidovorax citrulli).